A 497-amino-acid chain; its full sequence is Vacuolar-processing enzyme beta-isozyme 1 (497 aa).

The signal sequence occupies residues 1–23 (MAARCWVWGFVVALLAVAAAADG). An N-linked (GlcNAc...) asparagine glycan is attached at Asn-153. His-180 is a catalytic residue. The Nucleophile role is filled by Cys-222. Cysteines 255 and 269 form a disulfide. N-linked (GlcNAc...) asparagine glycosylation occurs at Asn-340. 2 cysteine pairs are disulfide-bonded: Cys-432–Cys-462 and Cys-444–Cys-479.

Belongs to the peptidase C13 family. Auto-catalytic activation. As to expression, expressed in developing seeds.

It is found in the protein storage vacuole. The enzyme catalyses Hydrolysis of proteins and small molecule substrates at -Asn-|-Xaa- bonds.. Functionally, asparagine-specific endopeptidase that may be involved in processing of proteins targeted to vacuoles. Cysteine protease required for post-translational proteolysis of seed storage proteins in the protein storage vacuole (PSV) of developing seeds, by processing of proglutelin precursor to mature glutelin subunits, thus contributing to the formation of protein crystalline structures in PSV. The sequence is that of Vacuolar-processing enzyme beta-isozyme 1 from Oryza sativa subsp. japonica (Rice).